Consider the following 564-residue polypeptide: Excitatory amino acid transporter 4 (564 aa).

Over 1–55 (MSSHGNSLFLRESGQRLGRVGWLQRLQESLQQRALRTRLRLQTMTREHVLRFLRR) the chain is Cytoplasmic. The residue at position 2 (serine 2) is a Phosphoserine. 3 consecutive transmembrane segments (helical) span residues 56-76 (NAFILLTVSAVVIGVSLAFAL), 99-119 (MLQMLVLPLIVSSLVTGMASL), and 133-153 (VYYMVTTVIAVFIGILMVTII). Residues asparagine 216, asparagine 232, and asparagine 239 are each glycosylated (N-linked (GlcNAc...) asparagine). 3 consecutive transmembrane segments (helical) span residues 262-285 (SANGINALGLVVFSVAFGLVIGGV), 295-322 (FFDSLNEAIMRMVGIIIWYAPVGILFLI), and 344-365 (LTVIVGLFLHAGGVLPLIYFLI). The discontinuously helical intramembrane region spans 371 to 401 (FPFIGGVLQALITAMGTSSSSATLPITFRCL). Position 388-390 (388-390 (SSS)) interacts with L-aspartate. Residues 411–437 (ITRFVLPVGATVNMDGTALYEALAAIF) traverse the membrane as a helical segment. Residues glycine 419, threonine 421, and asparagine 423 each contribute to the Na(+) site. L-aspartate is bound by residues threonine 427, 468–472 (IPQAG), aspartate 501, and asparagine 508. Positions 451–484 (ITTISITATAASVGAAGIPQAGLVTMVIVLTSVG) form an intramembrane region, discontinuously helical. A helical transmembrane segment spans residues 498-519 (WFLDRLRTMTNVLGDSIGAAVI). Residues asparagine 508 and aspartate 512 each coordinate Na(+).

Belongs to the dicarboxylate/amino acid:cation symporter (DAACS) (TC 2.A.23) family. SLC1A6 subfamily. In terms of assembly, homotrimer. Detected in brain, cerebellum and hippocampus.

The protein resides in the cell membrane. It carries out the reaction K(+)(in) + L-glutamate(out) + 3 Na(+)(out) + H(+)(out) = K(+)(out) + L-glutamate(in) + 3 Na(+)(in) + H(+)(in). The enzyme catalyses K(+)(in) + L-aspartate(out) + 3 Na(+)(out) + H(+)(out) = K(+)(out) + L-aspartate(in) + 3 Na(+)(in) + H(+)(in). The catalysed reaction is D-aspartate(out) + K(+)(in) + 3 Na(+)(out) + H(+)(out) = D-aspartate(in) + K(+)(out) + 3 Na(+)(in) + H(+)(in). In terms of biological role, sodium-dependent, high-affinity amino acid transporter that mediates the uptake of L-glutamate and also L-aspartate and D-aspartate. Functions as a symporter that transports one amino acid molecule together with two or three Na(+) ions and one proton, in parallel with the counter-transport of one K(+) ion. Mediates Cl(-) flux that is not coupled to amino acid transport; this avoids the accumulation of negative charges due to aspartate and Na(+) symport. Plays a redundant role in the rapid removal of released glutamate from the synaptic cleft, which is essential for terminating the postsynaptic action of glutamate. This is Excitatory amino acid transporter 4 (SLC1A6) from Canis lupus familiaris (Dog).